The following is a 156-amino-acid chain: Probable succinate transporter subunit YjjB (156 aa).

Transmembrane regions (helical) follow at residues 7–27 (WALLQDMVLAAIPALGFAMVF), 54–74 (FGMDIEPASLLASIMIGMIGI), 86–106 (VFTVAAVIPMFPGISAYTAMI), and 128–148 (FLKASFIVGSLSIGLSLPGLW).

Belongs to the ThrE exporter (TC 2.A.79) family. In terms of assembly, the transporter is composed of YjjB and YjjP.

The protein resides in the cell inner membrane. Its function is as follows. Involved in succinate export with YjjP. Both proteins are required for export. This chain is Probable succinate transporter subunit YjjB, found in Yersinia enterocolitica serotype O:8 / biotype 1B (strain NCTC 13174 / 8081).